The chain runs to 80 residues: MDVKHIKDYLSWLYYQYLLITCSYVLEPWEQSIFNTLLLTIIAMVIYSSYIFIPIHVRLAVEFFSGIFGGQHESTVALMS.

The Cytoplasmic portion of the chain corresponds to 1 to 11; sequence MDVKHIKDYLS. Residues 12-29 traverse the membrane as a helical segment; it reads WLYYQYLLITCSYVLEPW. Residues 30 to 36 are Lumenal-facing; it reads EQSIFNT. A helical transmembrane segment spans residues 37 to 57; that stretch reads LLLTIIAMVIYSSYIFIPIHV. Topologically, residues 58-80 are cytoplasmic; sequence RLAVEFFSGIFGGQHESTVALMS.

This sequence belongs to the SPTSS family. SPTSSB subfamily. Component of the serine palmitoyltransferase (SPT) complex, which is composed of SPTLC1, SPTLC2 or SPTLC3 and SPTSSA or SPTSSB. The heterodimer consisting of SPTLC1 and SPTLC2/SPTLC3 forms the catalytic core of the enzyme, while SPTSSA or SPTSSB subunits determine substrate specificity. SPT also interacts with ORMDL proteins, especially ORMDL3, which negatively regulate SPT activity in the presence of ceramides.

The protein resides in the endoplasmic reticulum membrane. It participates in lipid metabolism; sphingolipid metabolism. In terms of biological role, component of the serine palmitoyltransferase multisubunit enzyme (SPT) that catalyzes the initial and rate-limiting step in sphingolipid biosynthesis by condensing L-serine and activated acyl-CoA (most commonly palmitoyl-CoA) to form long-chain bases. The SPT complex is composed of SPTLC1, SPTLC2 or SPTLC3 and SPTSSA or SPTSSB. Within this complex, the heterodimer consisting of SPTLC1 and SPTLC2/SPTLC3 forms the catalytic core. Within the SPT complex, SPTSSB stimulates the catalytic activity and plays a role in substrate specificity. SPT complexes with this subunit showing a preference for longer acyl-CoAs. The SPTLC1-SPTLC2-SPTSSB complex shows a strong preference for C18-CoA substrate, while the SPTLC1-SPTLC3-SPTSSB isozyme displays an ability to use a broader range of acyl-CoAs, without apparent preference. The polypeptide is Serine palmitoyltransferase small subunit B (sptssb) (Xenopus tropicalis (Western clawed frog)).